The primary structure comprises 635 residues: DNA-directed RNA polymerase subunit gamma (635 aa).

4 residues coordinate Zn(2+): C74, C76, C89, and C92. D471, D473, and D475 together coordinate Mg(2+).

This sequence belongs to the RNA polymerase beta' chain family. RpoC1 subfamily. In cyanobacteria the RNAP catalytic core is composed of 2 alpha, 1 beta, 1 beta', 1 gamma and 1 omega subunit. When a sigma factor is associated with the core the holoenzyme is formed, which can initiate transcription. The cofactor is Mg(2+). Zn(2+) is required as a cofactor.

It carries out the reaction RNA(n) + a ribonucleoside 5'-triphosphate = RNA(n+1) + diphosphate. In terms of biological role, DNA-dependent RNA polymerase catalyzes the transcription of DNA into RNA using the four ribonucleoside triphosphates as substrates. The polypeptide is DNA-directed RNA polymerase subunit gamma (Prochlorococcus marinus (strain NATL2A)).